A 156-amino-acid chain; its full sequence is Small ribosomal subunit protein uS7 (156 aa).

This sequence belongs to the universal ribosomal protein uS7 family. In terms of assembly, part of the 30S ribosomal subunit. Contacts proteins S9 and S11.

One of the primary rRNA binding proteins, it binds directly to 16S rRNA where it nucleates assembly of the head domain of the 30S subunit. Is located at the subunit interface close to the decoding center, probably blocks exit of the E-site tRNA. In Geobacillus stearothermophilus (Bacillus stearothermophilus), this protein is Small ribosomal subunit protein uS7 (rpsG).